The following is a 359-amino-acid chain: MPSDTSANLYDLTRPALGALLSGWGFGPYHRDQLWTALYRRHATTFDELDGLKPELLRMLREHTRLGQLATHHESFSSDGFTHKLLLRLDDGQTIETVLMRFKGRATVCISTQAGCAMGCVFCATGQMGLSRHLTPGEIVGQILHVNRILRASGETLRNVVLMGMGEPLHNYEHTMSAVDVLVDALGLAMGPRFITLSTVGVVPGIRRLADEERPIHLAVSLHGATDAERAALVPAGRRWPLDELMDACRYYSEKRKRRIFFEWTLISGRNDTAEHAHTLGQLLRGMDAHVNVIPLNPTVGYDGGPSRPESVRAFQDVLATYDVPSTVRQRRGIDIDAGCGQLKATVERRSRRSLPTSA.

Glu-96 acts as the Proton acceptor in catalysis. In terms of domain architecture, Radical SAM core spans 102–335 (FKGRATVCIS…STVRQRRGID (234 aa)). Cys-109 and Cys-340 are joined by a disulfide. Cys-116, Cys-120, and Cys-123 together coordinate [4Fe-4S] cluster. Residues 166–167 (GE), Ser-198, 221–223 (SLH), and Asn-297 contribute to the S-adenosyl-L-methionine site. Residue Cys-340 is the S-methylcysteine intermediate of the active site.

The protein belongs to the radical SAM superfamily. RlmN family. The cofactor is [4Fe-4S] cluster.

It localises to the cytoplasm. It catalyses the reaction adenosine(2503) in 23S rRNA + 2 reduced [2Fe-2S]-[ferredoxin] + 2 S-adenosyl-L-methionine = 2-methyladenosine(2503) in 23S rRNA + 5'-deoxyadenosine + L-methionine + 2 oxidized [2Fe-2S]-[ferredoxin] + S-adenosyl-L-homocysteine. The enzyme catalyses adenosine(37) in tRNA + 2 reduced [2Fe-2S]-[ferredoxin] + 2 S-adenosyl-L-methionine = 2-methyladenosine(37) in tRNA + 5'-deoxyadenosine + L-methionine + 2 oxidized [2Fe-2S]-[ferredoxin] + S-adenosyl-L-homocysteine. Specifically methylates position 2 of adenine 2503 in 23S rRNA and position 2 of adenine 37 in tRNAs. m2A2503 modification seems to play a crucial role in the proofreading step occurring at the peptidyl transferase center and thus would serve to optimize ribosomal fidelity. This Myxococcus xanthus (strain DK1622) protein is Dual-specificity RNA methyltransferase RlmN 1.